A 147-amino-acid polypeptide reads, in one-letter code: Hemoglobin subunit beta-1 (147 aa).

Valine 2 carries the N-acetylvaline modification. The 145-residue stretch at 3–147 (HLTGEEKAAV…VATALAHKYH (145 aa)) folds into the Globin domain. Lysine 18 carries the post-translational modification N6-succinyllysine. A Phosphoserine modification is found at serine 45. Lysine 60 is modified (N6-succinyllysine). Heme b contacts are provided by histidine 64 and histidine 93. Arginine 105 bears the Asymmetric dimethylarginine mark. Threonine 124 carries the post-translational modification Phosphothreonine.

This sequence belongs to the globin family. Hb1 is a heterotetramer of two alpha chains and two beta-1 chains. In terms of tissue distribution, red blood cells.

Its function is as follows. Involved in oxygen transport from the lung to the various peripheral tissues. The sequence is that of Hemoglobin subunit beta-1 (HBB1) from Chalinolobus morio (Chocolate-wattled bat).